The primary structure comprises 211 residues: Ribosomal RNA small subunit methyltransferase G (211 aa).

S-adenosyl-L-methionine-binding positions include glycine 73, 126–127 (IE), and arginine 142.

The protein belongs to the methyltransferase superfamily. RNA methyltransferase RsmG family.

Its subcellular location is the cytoplasm. The enzyme catalyses guanosine(527) in 16S rRNA + S-adenosyl-L-methionine = N(7)-methylguanosine(527) in 16S rRNA + S-adenosyl-L-homocysteine. Its function is as follows. Specifically methylates the N7 position of guanine in position 527 of 16S rRNA. The chain is Ribosomal RNA small subunit methyltransferase G from Methylorubrum populi (strain ATCC BAA-705 / NCIMB 13946 / BJ001) (Methylobacterium populi).